We begin with the raw amino-acid sequence, 482 residues long: UDP-glycosyltransferase 86A2 (482 aa).

UDP-alpha-D-glucose contacts are provided by residues S297, 355–357, 372–380, and 394–397; these read CCQ, HCGWNSILE, and LTDQ.

It belongs to the UDP-glycosyltransferase family.

The protein is UDP-glycosyltransferase 86A2 (UGT86A2) of Arabidopsis thaliana (Mouse-ear cress).